The following is a 156-amino-acid chain: Small ribosomal subunit protein uS7 (156 aa).

Belongs to the universal ribosomal protein uS7 family. As to quaternary structure, part of the 30S ribosomal subunit. Contacts proteins S9 and S11.

In terms of biological role, one of the primary rRNA binding proteins, it binds directly to 16S rRNA where it nucleates assembly of the head domain of the 30S subunit. Is located at the subunit interface close to the decoding center, probably blocks exit of the E-site tRNA. This chain is Small ribosomal subunit protein uS7, found in Desulfitobacterium hafniense (strain Y51).